A 20-amino-acid polypeptide reads, in one-letter code: QNCCNGGCSSKWCKGHARCC.

A Pyrrolidone carboxylic acid modification is found at Gln-1. 3 cysteine pairs are disulfide-bonded: Cys-3/Cys-13, Cys-4/Cys-19, and Cys-8/Cys-20. Residue Cys-20 is modified to Cysteine amide.

As to expression, expressed by the venom duct.

The protein localises to the secreted. Functionally, mu-conotoxins block voltage-gated sodium channels (VGSC). Potently displaces (125)I-TIIIA from native rat brain Nav1.2/SCN2A (IC(50) is 5 nM) and muscle Nav1.4/SCN4A (IC(50) is 3 nM) VGSCs. Potently and irreversibly inhibits current through Xenopus oocyte-expressed Nav1.2/SCN2A and Nav1.4/SCN4A. The protein is Mu-conotoxin SIIIB of Conus striatus (Striated cone).